A 492-amino-acid chain; its full sequence is Ethanolamine-phosphate phospho-lyase (492 aa).

Lys-280 carries the N6-(pyridoxal phosphate)lysine modification. Positions 462 to 492 are disordered; the sequence is ASDENGLVHPSNGNSHKHTSTIPLSKKTKRN.

This sequence belongs to the class-III pyridoxal-phosphate-dependent aminotransferase family. In terms of assembly, homotetramer. Pyridoxal 5'-phosphate serves as cofactor.

The protein localises to the mitochondrion. The catalysed reaction is phosphoethanolamine + H2O = acetaldehyde + NH4(+) + phosphate. Its function is as follows. Catalyzes the pyridoxal-phosphate-dependent breakdown of phosphoethanolamine, converting it to ammonia, inorganic phosphate and acetaldehyde. In Danio rerio (Zebrafish), this protein is Ethanolamine-phosphate phospho-lyase (etnppl).